The following is a 184-amino-acid chain: Ribosome-recycling factor (184 aa).

This sequence belongs to the RRF family.

The protein resides in the cytoplasm. Its function is as follows. Responsible for the release of ribosomes from messenger RNA at the termination of protein biosynthesis. May increase the efficiency of translation by recycling ribosomes from one round of translation to another. The protein is Ribosome-recycling factor of Oleidesulfovibrio alaskensis (strain ATCC BAA-1058 / DSM 17464 / G20) (Desulfovibrio alaskensis).